Consider the following 565-residue polypeptide: Glucose starvation modulator protein 1 (565 aa).

A DNA-binding region (zn(2)-C6 fungal-type) is located at residues 20–48 (CVFCHQKHLQCSNERPCKNCVKRNIAHGC). Disordered stretches follow at residues 63-106 (GVSG…ESSN) and 250-269 (QVSPSPSNTSTSENNTNTLS). Residues 82-93 (SPLSTSMSPTDS) show a composition bias toward polar residues. Over residues 252 to 269 (SPSPSNTSTSENNTNTLS) the composition is skewed to low complexity.

This sequence belongs to the ERT1/acuK family.

It is found in the nucleus. Functionally, transcription factor which regulates nonfermentable carbon utilization. The polypeptide is Glucose starvation modulator protein 1 (GSM1) (Candida dubliniensis (strain CD36 / ATCC MYA-646 / CBS 7987 / NCPF 3949 / NRRL Y-17841) (Yeast)).